The sequence spans 241 residues: Carboxy-S-adenosyl-L-methionine synthase (241 aa).

S-adenosyl-L-methionine contacts are provided by residues tyrosine 38, glycine 63–serine 65, aspartate 88–asparagine 89, aspartate 116–isoleucine 117, asparagine 131, and arginine 198.

It belongs to the class I-like SAM-binding methyltransferase superfamily. Cx-SAM synthase family. As to quaternary structure, homodimer.

The catalysed reaction is prephenate + S-adenosyl-L-methionine = carboxy-S-adenosyl-L-methionine + 3-phenylpyruvate + H2O. Its function is as follows. Catalyzes the conversion of S-adenosyl-L-methionine (SAM) to carboxy-S-adenosyl-L-methionine (Cx-SAM). This chain is Carboxy-S-adenosyl-L-methionine synthase, found in Haemophilus influenzae (strain 86-028NP).